We begin with the raw amino-acid sequence, 171 residues long: MTGIGEQSIAEQVRRLLEPVLERDGYELVEVEWARLAGRWTLRVFIDKAGGVGIDDCQAVSKTVEPILDVADVIEPAYDLEVSSPGLDRPLRKPGDFDRYAGQRVHVKAYGPVAGTAPGAPARKHWTGVLKGFRDGAVELDVDGVLHRVPHDQIAKANLEYDVEGDLRRKD.

It belongs to the RimP family.

It is found in the cytoplasm. Functionally, required for maturation of 30S ribosomal subunits. The sequence is that of Ribosome maturation factor RimP from Anaeromyxobacter dehalogenans (strain 2CP-1 / ATCC BAA-258).